A 313-amino-acid chain; its full sequence is METANYTKVTEFVLTGLSQTREVQLVLFVIFLSFYLFILPGNILIICTIRLDPHLTSPMYFLLANLALLDIWYSSITAPKMLIDFFVERKIISFGGCIAQLFFLHFVGASEMFLLTVMAYDRYAAICRPLHYATIMNRRLCCILVALSWMGGFIHSIIQVALIVRLPFCGPNELDSYFCDITQVVRIACANTFPEELVMICSSGLISVVCFIALLMSYAFLLALLKKHSGSGENTNRAMSTCYSHITIVVLMFGPSIYIYARPFDSFSLDKVVSVFHTVIFPLLNPIIYTLRNKEVKAAMRKVVTKYILCEEK.

Residues 1–25 (METANYTKVTEFVLTGLSQTREVQL) lie on the Extracellular side of the membrane. N5 carries N-linked (GlcNAc...) asparagine glycosylation. A helical transmembrane segment spans residues 26-49 (VLFVIFLSFYLFILPGNILIICTI). The Cytoplasmic segment spans residues 50–57 (RLDPHLTS). The helical transmembrane segment at 58–79 (PMYFLLANLALLDIWYSSITAP) threads the bilayer. The Extracellular segment spans residues 80–100 (KMLIDFFVERKIISFGGCIAQ). A disulfide bond links C97 and C189. A helical membrane pass occupies residues 101–120 (LFFLHFVGASEMFLLTVMAY). Residues 121–139 (DRYAAICRPLHYATIMNRR) lie on the Cytoplasmic side of the membrane. Residues 140-158 (LCCILVALSWMGGFIHSII) traverse the membrane as a helical segment. At 159–195 (QVALIVRLPFCGPNELDSYFCDITQVVRIACANTFPE) the chain is on the extracellular side. The chain crosses the membrane as a helical span at residues 196 to 219 (ELVMICSSGLISVVCFIALLMSYA). Topologically, residues 220–237 (FLLALLKKHSGSGENTNR) are cytoplasmic. A helical membrane pass occupies residues 238–260 (AMSTCYSHITIVVLMFGPSIYIY). Residues 261–271 (ARPFDSFSLDK) are Extracellular-facing. The chain crosses the membrane as a helical span at residues 272–291 (VVSVFHTVIFPLLNPIIYTL). The Cytoplasmic segment spans residues 292 to 313 (RNKEVKAAMRKVVTKYILCEEK).

Belongs to the G-protein coupled receptor 1 family. Highly expressed in the testis and olfactory bulb.

The protein localises to the cell membrane. In terms of biological role, olfactory receptor that acts as a receptor of Asprosin hormone, potentially at the surface of hepatocytes and may help to promote hepatocyte glucose release. The sequence is that of Olfactory receptor 4M1 from Homo sapiens (Human).